The sequence spans 150 residues: UPF0178 protein Reut_B5138 (150 aa).

Belongs to the UPF0178 family.

The chain is UPF0178 protein Reut_B5138 from Cupriavidus pinatubonensis (strain JMP 134 / LMG 1197) (Cupriavidus necator (strain JMP 134)).